Consider the following 388-residue polypeptide: S-adenosylmethionine synthase (388 aa).

Histidine 17 is an ATP binding site. Residue aspartate 19 coordinates Mg(2+). Glutamate 45 lines the K(+) pocket. Residues glutamate 58 and glutamine 106 each coordinate L-methionine. Positions 106–116 (QSAHISQGVDR) are flexible loop. Residues 166-168 (DAK), aspartate 241, 247-248 (RK), alanine 264, and lysine 268 contribute to the ATP site. Position 241 (aspartate 241) interacts with L-methionine. Residue lysine 272 coordinates L-methionine.

This sequence belongs to the AdoMet synthase family. Homotetramer; dimer of dimers. It depends on Mg(2+) as a cofactor. The cofactor is K(+).

Its subcellular location is the cytoplasm. It catalyses the reaction L-methionine + ATP + H2O = S-adenosyl-L-methionine + phosphate + diphosphate. It functions in the pathway amino-acid biosynthesis; S-adenosyl-L-methionine biosynthesis; S-adenosyl-L-methionine from L-methionine: step 1/1. Its function is as follows. Catalyzes the formation of S-adenosylmethionine (AdoMet) from methionine and ATP. The overall synthetic reaction is composed of two sequential steps, AdoMet formation and the subsequent tripolyphosphate hydrolysis which occurs prior to release of AdoMet from the enzyme. In Paracoccus denitrificans (strain Pd 1222), this protein is S-adenosylmethionine synthase.